The chain runs to 481 residues: Protein nucleotidyltransferase YdiU (481 aa).

Gly85, Gly87, Arg88, Lys108, Asp120, Gly121, Arg172, and Arg179 together coordinate ATP. The active-site Proton acceptor is the Asp248. Mg(2+) is bound by residues Asn249 and Asp258. Asp258 contacts ATP.

It belongs to the SELO family. The cofactor is Mg(2+). It depends on Mn(2+) as a cofactor.

The enzyme catalyses L-seryl-[protein] + ATP = 3-O-(5'-adenylyl)-L-seryl-[protein] + diphosphate. The catalysed reaction is L-threonyl-[protein] + ATP = 3-O-(5'-adenylyl)-L-threonyl-[protein] + diphosphate. It carries out the reaction L-tyrosyl-[protein] + ATP = O-(5'-adenylyl)-L-tyrosyl-[protein] + diphosphate. It catalyses the reaction L-histidyl-[protein] + UTP = N(tele)-(5'-uridylyl)-L-histidyl-[protein] + diphosphate. The enzyme catalyses L-seryl-[protein] + UTP = O-(5'-uridylyl)-L-seryl-[protein] + diphosphate. The catalysed reaction is L-tyrosyl-[protein] + UTP = O-(5'-uridylyl)-L-tyrosyl-[protein] + diphosphate. Nucleotidyltransferase involved in the post-translational modification of proteins. It can catalyze the addition of adenosine monophosphate (AMP) or uridine monophosphate (UMP) to a protein, resulting in modifications known as AMPylation and UMPylation. The sequence is that of Protein nucleotidyltransferase YdiU from Cereibacter sphaeroides (strain ATCC 17023 / DSM 158 / JCM 6121 / CCUG 31486 / LMG 2827 / NBRC 12203 / NCIMB 8253 / ATH 2.4.1.) (Rhodobacter sphaeroides).